A 283-amino-acid chain; its full sequence is MQIITEPCQMQAVVEKLRLNRQLIGVVMTMGALHEGHLSLIKQARSLAGTVILTIFVNPKQFGPDEDFHRYPRPFELDASHAKAAGVDYLFAPSPEAIYPEGFQTTVQTGAVAEGLEGMKRPGHFNGVATVVTKLLLITKPHIALFGEKDAQQLAVINRLVRDLNLDVRIIGAPIVREENGLAVSSRNIYLSKEQRESATVLFRGILHAEKELAAGRTDLAGIAGEIERMIAGEPECRPDYVCFVHDNDFMTAETAEPAGEYRLLIAAYAGTVRLIDNRRFTT.

Position 30–37 (30–37 (MGALHEGH)) interacts with ATP. The active-site Proton donor is His-37. Position 61 (Gln-61) interacts with (R)-pantoate. Gln-61 is a binding site for beta-alanine. 147–150 (GEKD) contacts ATP. Gln-153 is a binding site for (R)-pantoate. Residues Val-176 and 184–187 (VSSR) contribute to the ATP site.

The protein belongs to the pantothenate synthetase family. In terms of assembly, homodimer.

The protein resides in the cytoplasm. It catalyses the reaction (R)-pantoate + beta-alanine + ATP = (R)-pantothenate + AMP + diphosphate + H(+). The protein operates within cofactor biosynthesis; (R)-pantothenate biosynthesis; (R)-pantothenate from (R)-pantoate and beta-alanine: step 1/1. In terms of biological role, catalyzes the condensation of pantoate with beta-alanine in an ATP-dependent reaction via a pantoyl-adenylate intermediate. The chain is Pantothenate synthetase from Chlorobium limicola (strain DSM 245 / NBRC 103803 / 6330).